The chain runs to 219 residues: Ribose-5-phosphate isomerase A (219 aa).

Substrate contacts are provided by residues 28–31 (SGST), 81–84 (DGAD), and 94–97 (KGGG). The active-site Proton acceptor is the glutamate 103. Position 121 (lysine 121) interacts with substrate.

This sequence belongs to the ribose 5-phosphate isomerase family. Homodimer.

It carries out the reaction aldehydo-D-ribose 5-phosphate = D-ribulose 5-phosphate. Its pathway is carbohydrate degradation; pentose phosphate pathway; D-ribose 5-phosphate from D-ribulose 5-phosphate (non-oxidative stage): step 1/1. Its function is as follows. Catalyzes the reversible conversion of ribose-5-phosphate to ribulose 5-phosphate. In Mannheimia succiniciproducens (strain KCTC 0769BP / MBEL55E), this protein is Ribose-5-phosphate isomerase A.